An 84-amino-acid polypeptide reads, in one-letter code: Esculentin-1SIa (84 aa).

Residues methionine 1–cysteine 22 form the signal peptide. A propeptide spans glutamate 23–isoleucine 36 (removed in mature form). Cysteine 78 and cysteine 84 are disulfide-bonded.

Expressed by the skin glands.

The protein resides in the secreted. Has antimicrobial activity against Gram-negative bacterium E.coli ATCC 8739 (MIC=6.3 ug), against Gram positive bacteria S.aureus ATCC 6538 (MIC=3.1 ug), methicillin-resistant S.aureus ATCC 43300 (MIC=25 ug) and B.subtilis ATCC 6633 (MIC=25 ug). Has no activity against fungus C.albicans ATCC 90028. The chain is Esculentin-1SIa from Odorrana ishikawae (Ishikawa's frog).